The following is a 966-amino-acid chain: Envelope glycoprotein (966 aa).

The N-terminal stretch at 1–83 (MDAGARYMRL…LLGINMCVSA (83 aa)) is a signal peptide. Residues 84-801 (EDYITLISDP…SLKDVFDWSG (718 aa)) are Extracellular-facing. Asn101, Asn134, Asn179, Asn220, Asn231, Asn334, Asn351, Asn357, Asn382, Asn403, Asn407, Asn438, Asn443, Asn449, Asn459, Asn469, Asn483, Asn495, Asn505, Asn511, Asn529, and Asn536 each carry an N-linked (GlcNAc...) asparagine; by host glycan. The segment at 633-653 (GVGLVIMLVIMAIVAAAGASL) is fusion peptide. Coiled coils occupy residues 665–715 (KAAV…RIML) and 756–791 (RGLQ…EVWE). Positions 699–715 (LEARVARVEAITDRIML) are immunosuppression. The helical transmembrane segment at 802–822 (WFSWLKYIPIIVVGLLGCILI) threads the bilayer. The Cytoplasmic segment spans residues 823-966 (RAVICVCQPL…LWCYKKSKSL (144 aa)).

In terms of assembly, the mature envelope protein (Env) consists of a trimer of SU-TM heterodimers attached by noncovalent interactions or by a labile interchain disulfide bond. Post-translationally, specific enzymatic cleavages in vivo yield mature proteins. Envelope glycoproteins are synthesized as an inactive precursor that is N-glycosylated and processed likely by host cell furin or by a furin-like protease in the Golgi to yield the mature SU and TM proteins. The cleavage site between SU and TM requires the minimal sequence [KR]-X-[KR]-R.

Its subcellular location is the virion membrane. The protein resides in the host cell membrane. In terms of biological role, the surface protein (SU) attaches the virus to the host cell by binding to its receptor. This interaction triggers the refolding of the transmembrane protein (TM) and is thought to activate its fusogenic potential by unmasking its fusion peptide. Fusion occurs at the host cell plasma membrane. The transmembrane protein (TM) acts as a class I viral fusion protein. Under the current model, the protein has at least 3 conformational states: pre-fusion native state, pre-hairpin intermediate state, and post-fusion hairpin state. During viral and target cell membrane fusion, the coiled coil regions (heptad repeats) assume a trimer-of-hairpins structure, positioning the fusion peptide in close proximity to the C-terminal region of the ectodomain. The formation of this structure appears to drive apposition and subsequent fusion of viral and target cell membranes. Membranes fusion leads to delivery of the nucleocapsid into the cytoplasm. The polypeptide is Envelope glycoprotein (env) (Caprine arthritis encephalitis virus (strain Cork) (CAEV-Co)).